The primary structure comprises 440 residues: Gamma-aminobutyric acid receptor subunit pi (440 aa).

The first 23 residues, 1–23 (MSYSLYLAFVCLNLLAQRMCIQG), serve as a signal peptide directing secretion. Residues 24–241 (NQFNVEVSRS…LVLQFELRRN (218 aa)) are Extracellular-facing. 3 N-linked (GlcNAc...) asparagine glycosylation sites follow: Asn43, Asn102, and Asn145. Residues Cys160 and Cys174 are joined by a disulfide bond. 2 N-linked (GlcNAc...) asparagine glycosylation sites follow: Asn196 and Asn228. A helical transmembrane segment spans residues 242-262 (VLYFILETYVPSTFLVVLSWV). At 263 to 270 (SFWISLES) the chain is on the cytoplasmic side. Residues 271 to 290 (VPARTCIGVTTVLSMTTLMI) form a helical membrane-spanning segment. Residues 291-301 (GSRTSLPNTNC) lie on the Extracellular side of the membrane. The helical transmembrane segment at 302-322 (FIKAIDVYLGICFSFVFGALL) threads the bilayer. Over 323-419 (EYAVAHYSSL…NPSNVDRYSK (97 aa)) the chain is Cytoplasmic. The chain crosses the membrane as a helical span at residues 420-440 (LLFPLIFMLANVFYWAYYMYF).

The protein belongs to the ligand-gated ion channel (TC 1.A.9) family. Gamma-aminobutyric acid receptor (TC 1.A.9.5) subfamily. GABRP sub-subfamily. Heteropentamer, formed by a combination of alpha (GABRA1-6), beta (GABRB1-3), gamma (GABRG1-3), delta (GABRD), epsilon (GABRE), rho (GABRR1-3), pi (GABRP) and theta (GABRQ) chains, each subunit exhibiting distinct physiological and pharmacological properties. In terms of tissue distribution, expressed in lungs, in alveolar epithelium.

The protein resides in the cell membrane. The protein localises to the apical cell membrane. It catalyses the reaction chloride(in) = chloride(out). Functionally, pi subunit of the heteropentameric ligand-gated chloride channel gated by gamma-aminobutyric acid (GABA). GABA-gated chloride channels, also named GABA(A) receptors (GABAAR), consist of five subunits arranged around a central pore and contain GABA active binding site(s) located at the alpha and beta subunit interfaces. When activated by GABA, GABAARs selectively allow the flow of chloride anions across the cell membrane down their electrochemical gradient. Pi-containing GABAARs are mostly located in peripheral tissues. In the uterus, pi subunits modulate uterus contraction by altering the sensitivity of GABAARs to pregnanolone. In the lungs, pi-containing GABAARs contribute to pulmonary fluid transport via luminal secretion of chloride. The chain is Gamma-aminobutyric acid receptor subunit pi from Rattus norvegicus (Rat).